The chain runs to 329 residues: Cytosolic arginine sensor for mTORC1 subunit 1 (329 aa).

Ser-14 carries the phosphoserine modification. ACT domains follow at residues 72–138 (AEAT…HTLA) and 260–321 (GELW…EVLQ). Residues 111-112 (SV), Gly-274, 280-281 (IV), and 300-304 (TFNFD) contribute to the L-arginine site.

The protein belongs to the GATS family. As to quaternary structure, forms homodimers and heterodimers with CASTOR2. Interacts with the GATOR2 complex which is composed of MIOS, SEC13, SEH1L, WDR24 and WDR59; the interaction is negatively regulated by arginine. Interacts with TM4SF5; the interaction is positively regulated by leucine and is negatively regulated by arginine. Post-translationally, phosphorylation at Ser-14 by AKT1, promoting the interaction between CASTOR1 and RNF167. In terms of processing, ubiquitinated by RNF167 via 'Lys-29'-polyubiquitination, leading to its degradation, releasing the GATOR2 complex. Ubiquitination by RNF167 is promoted by phosphorylation at Ser-14 by AKT1.

Its subcellular location is the cytoplasm. The protein resides in the cytosol. Its function is as follows. Functions as an intracellular arginine sensor within the amino acid-sensing branch of the TORC1 signaling pathway. As a homodimer or a heterodimer with CASTOR2, binds and inhibits the GATOR subcomplex GATOR2 and thereby mTORC1. Binding of arginine to CASTOR1 allosterically disrupts the interaction of CASTOR1-containing dimers with GATOR2 which can in turn activate mTORC1 and the TORC1 signaling pathway. In Bos taurus (Bovine), this protein is Cytosolic arginine sensor for mTORC1 subunit 1.